We begin with the raw amino-acid sequence, 98 residues long: Integration host factor subunit alpha (98 aa).

The tract at residues 51–71 (NFDLRDKNERPGRNPKTGEDI) is disordered. Positions 53–69 (DLRDKNERPGRNPKTGE) are enriched in basic and acidic residues.

It belongs to the bacterial histone-like protein family. Heterodimer of an alpha and a beta chain.

Its function is as follows. This protein is one of the two subunits of integration host factor, a specific DNA-binding protein that functions in genetic recombination as well as in transcriptional and translational control. This is Integration host factor subunit alpha from Vibrio campbellii (strain ATCC BAA-1116).